The primary structure comprises 706 residues: B-cell lymphoma 6 protein (706 aa).

One can recognise a BTB domain in the interval Thr-32–Glu-99. A disordered region spans residues Glu-317–Ser-349. Polar residues predominate over residues Ser-330–Ser-349. Phosphoserine; by MAPK1 is present on residues Ser-333 and Ser-343. At Ser-361 the chain carries Phosphoserine. The segment at Lys-376–Lys-379 is required for interaction with NuRD complex and for transcriptional repressor activity. Lys-379 carries the post-translational modification N6-acetyllysine. Ser-404 is modified (phosphoserine). A disordered region spans residues Ala-407 to Pro-467. Residues Asp-424–Gly-456 show a composition bias toward polar residues. A compositionally biased stretch (low complexity) spans Ser-457–Ser-466. 6 C2H2-type zinc fingers span residues Phe-518 to His-541, Tyr-546 to His-568, Tyr-574 to His-596, Tyr-602 to His-624, Tyr-630 to His-652, and Tyr-658 to His-681.

As to quaternary structure, homodimer. Interacts (via BTB domain) with the corepressors BCOR, NCOR1 and SMRT/NCOR2; the interactions are direct. Forms preferably ternary complexes with BCOR and SMRT/NCOR2 on target gene promoters but, on enhancer elements, interacts with SMRT/NCOR2 and HDAC3 to repress proximal gene expression. Interacts with histone deacetylases HDAC2, HDAC5 and HDAC9 (via the catalytic domain). Interacts with ZBTB7 and BCL6B. Interacts with SCF(FBXO11) complex; the interaction is independent of phosphorylation and promotes ubiquitination. Interacts (when phosphorylated) with PIN1; the interaction is required for BCL6 degradation upon genotoxic stress. Interacts with ZBTB17; inhibits ZBTB17 transcriptional activity. Interacts with CTBP1, autoinhibits its transcriptional expression. Interacts with NOTCH1 NCID and SIRT1; leads to a epigenetic repression of selective NOTCH1-target genes. Interacts (nor via BTB domain neither acetylated) with the NuRD complex components CHD4, HDAC1, MBD3 and MTA3; the interaction with MTA3 inhibits BCL6 acetylation and is required for BCL6 transpriptional repression. In terms of processing, phosphorylated by MAPK1 in response to antigen receptor activation at Ser-333 and Ser-343. Phosphorylated by ATM in response to genotoxic stress. Phosphorylation induces its degradation by ubiquitin/proteasome pathway. Polyubiquitinated. Polyubiquitinated by SCF(FBXO11), leading to its degradation by the proteasome. Ubiquitinated by the SCF(FBXL17) complex, leading to its degradation by the proteasome: ubiquitination by the SCF(FBXL17) complex takes place when aberrant BTB domain dimers are formed. Post-translationally, acetylated at Lys-379 by EP300 which inhibits the interaction with NuRD complex and the transcriptional repressor function. Deacetylated by HDAC- and SIR2-dependent pathways. In terms of tissue distribution, expressed in germinal center T- and B-cells and in primary immature dendritic cells.

It localises to the nucleus. Its function is as follows. Transcriptional repressor mainly required for germinal center (GC) formation and antibody affinity maturation which has different mechanisms of action specific to the lineage and biological functions. Forms complexes with different corepressors and histone deacetylases to repress the transcriptional expression of different subsets of target genes. Represses its target genes by binding directly to the DNA sequence 5'-TTCCTAGAA-3' (BCL6-binding site) or indirectly by repressing the transcriptional activity of transcription factors. In GC B-cells, represses genes that function in differentiation, inflammation, apoptosis and cell cycle control, also autoregulates its transcriptional expression and up-regulates, indirectly, the expression of some genes important for GC reactions, such as AICDA, through the repression of microRNAs expression, like miR155. An important function is to allow GC B-cells to proliferate very rapidly in response to T-cell dependent antigens and tolerate the physiological DNA breaks required for immunglobulin class switch recombination and somatic hypermutation without inducing a p53/TP53-dependent apoptotic response. In follicular helper CD4(+) T-cells (T(FH) cells), promotes the expression of T(FH)-related genes but inhibits the differentiation of T(H)1, T(H)2 and T(H)17 cells. Also required for the establishment and maintenance of immunological memory for both T- and B-cells. Suppresses macrophage proliferation through competition with STAT5 for STAT-binding motifs binding on certain target genes, such as CCL2 and CCND2. In response to genotoxic stress, controls cell cycle arrest in GC B-cells in both p53/TP53-dependedent and -independent manners. Besides, also controls neurogenesis through the alteration of the composition of NOTCH-dependent transcriptional complexes at selective NOTCH targets, such as HES5, including the recruitment of the deacetylase SIRT1 and resulting in an epigenetic silencing leading to neuronal differentiation. The protein is B-cell lymphoma 6 protein (BCL6) of Homo sapiens (Human).